The following is a 468-amino-acid chain: MSSGKIAQVVGPVVDVVFASGDKLPEINNALIVYKDGDKKQKIVLEVALELGDGMVRTIAMESTDGLTRGLEVLDTGRAISVPVGKETLGRVFNVLGETIDLEAPFADDVNREPIHKKAPAFDELSTSSEILETGIKVIDLLAPYLKGGKVGLFGGAGVGKTVLIQELIHNIAQEHGGISVFTGVGERTREGNDLYWEMKESGVIEKTAMVFGQMNEPPGARMRVALTGLTIAEYFRDVEGQDVLLFIDNIFRFTQAGSEVSALLGRMPSAVGYQPTLATEMGQLQERITSTKKGSVTSIQAIYVPADDYTDPAPATAFAHLDSTTNLERKLTQMGIYPAVDPLASSSRALSPEIVGEEHYAVATEVQRVLQRYRELQDIIAILGMDELSEEEKTLVGRARRIQFFLSQNFNVAEQFTGLPGSYVPVAETVRGFKEILEGKHDHLPEDAFRAVGPIEDVIEKAKKMGF.

155 to 162 contacts ATP; that stretch reads GGAGVGKT.

Belongs to the ATPase alpha/beta chains family. In terms of assembly, F-type ATPases have 2 components, CF(1) - the catalytic core - and CF(0) - the membrane proton channel. CF(1) has five subunits: alpha(3), beta(3), gamma(1), delta(1), epsilon(1). CF(0) has three main subunits: a(1), b(2) and c(9-12). The alpha and beta chains form an alternating ring which encloses part of the gamma chain. CF(1) is attached to CF(0) by a central stalk formed by the gamma and epsilon chains, while a peripheral stalk is formed by the delta and b chains.

Its subcellular location is the cell membrane. The catalysed reaction is ATP + H2O + 4 H(+)(in) = ADP + phosphate + 5 H(+)(out). Its function is as follows. Produces ATP from ADP in the presence of a proton gradient across the membrane. The catalytic sites are hosted primarily by the beta subunits. This Streptococcus equi subsp. zooepidemicus (strain H70) protein is ATP synthase subunit beta.